The chain runs to 464 residues: tRNA modification GTPase MnmE (464 aa).

Positions 27, 90, and 129 each coordinate (6S)-5-formyl-5,6,7,8-tetrahydrofolate. Residues 222-384 (GVALVLAGSV…LYDKIRALIS (163 aa)) enclose the TrmE-type G domain. Residues 232–237 (NAGKSS), 251–257 (SSYPGTT), and 276–279 (DTAG) contribute to the GTP site. Mg(2+)-binding residues include serine 236 and threonine 257. A (6S)-5-formyl-5,6,7,8-tetrahydrofolate-binding site is contributed by lysine 464.

This sequence belongs to the TRAFAC class TrmE-Era-EngA-EngB-Septin-like GTPase superfamily. TrmE GTPase family. Homodimer. Heterotetramer of two MnmE and two MnmG subunits. K(+) is required as a cofactor.

The protein localises to the cytoplasm. Functionally, exhibits a very high intrinsic GTPase hydrolysis rate. Involved in the addition of a carboxymethylaminomethyl (cmnm) group at the wobble position (U34) of certain tRNAs, forming tRNA-cmnm(5)s(2)U34. This chain is tRNA modification GTPase MnmE, found in Borreliella burgdorferi (strain ATCC 35210 / DSM 4680 / CIP 102532 / B31) (Borrelia burgdorferi).